The chain runs to 72 residues: Translation initiation factor IF-1 (72 aa).

The S1-like domain maps to 1–72 (MAKEDNIEMQ…SKGRIVFRSR (72 aa)).

Belongs to the IF-1 family. Component of the 30S ribosomal translation pre-initiation complex which assembles on the 30S ribosome in the order IF-2 and IF-3, IF-1 and N-formylmethionyl-tRNA(fMet); mRNA recruitment can occur at any time during PIC assembly.

Its subcellular location is the cytoplasm. In terms of biological role, one of the essential components for the initiation of protein synthesis. Stabilizes the binding of IF-2 and IF-3 on the 30S subunit to which N-formylmethionyl-tRNA(fMet) subsequently binds. Helps modulate mRNA selection, yielding the 30S pre-initiation complex (PIC). Upon addition of the 50S ribosomal subunit IF-1, IF-2 and IF-3 are released leaving the mature 70S translation initiation complex. This is Translation initiation factor IF-1 from Klebsiella pneumoniae subsp. pneumoniae (strain ATCC 700721 / MGH 78578).